A 202-amino-acid chain; its full sequence is N-(5'-phosphoribosyl)anthranilate isomerase (202 aa).

It belongs to the TrpF family.

It carries out the reaction N-(5-phospho-beta-D-ribosyl)anthranilate = 1-(2-carboxyphenylamino)-1-deoxy-D-ribulose 5-phosphate. Its pathway is amino-acid biosynthesis; L-tryptophan biosynthesis; L-tryptophan from chorismate: step 3/5. The chain is N-(5'-phosphoribosyl)anthranilate isomerase from Listeria monocytogenes serovar 1/2a (strain ATCC BAA-679 / EGD-e).